The sequence spans 634 residues: Nicotinic receptor-associated protein 1 (634 aa).

C2 domains follow at residues 1-141 (MNQP…KAHL) and 159-295 (KTGS…EILL). The Ca(2+) site is built by L29, D30, D36, D105, D107, D119, D189, D195, D251, D253, and D271. Positions 338–557 (DFAVAVDFTA…LDPDVIQENL (220 aa)) constitute a VWFA domain. The interval 576–603 (RGFQPRPVDDPWRRDSPPPEFDPILDGT) is disordered. Residues 582–592 (PVDDPWRRDSP) are compositionally biased toward basic and acidic residues.

Belongs to the copine family. As to quaternary structure, interacts with nicotinic acetylcholine receptor. Requires Ca(2+) as cofactor. In terms of tissue distribution, expressed in head and tail neurons, ventral cord moto-neurons, body wall muscles and hypodermal cells of the vulva.

The protein localises to the cell membrane. In terms of biological role, exhibits calcium-dependent phospholipid binding properties. May function in membrane trafficking. Regulates synaptic levels of nicotinic acetylcholine receptor subunit lev-1 and unc-38 in the nerve cord. Involved in nicotinic acetylcholine receptor (nAChR)-mediated sensitivity to nicotine and levamisole. Affects directional sperm motility. The polypeptide is Nicotinic receptor-associated protein 1 (nra-1) (Caenorhabditis elegans).